The sequence spans 149 residues: FAD synthase (149 aa).

ATP is bound by residues 9 to 10, 14 to 17, aspartate 93, and tyrosine 120; these read VF and HPGH.

This sequence belongs to the archaeal FAD synthase family. As to quaternary structure, homodimer. The cofactor is a divalent metal cation.

The catalysed reaction is FMN + ATP + H(+) = FAD + diphosphate. Its pathway is cofactor biosynthesis; FAD biosynthesis; FAD from FMN: step 1/1. In terms of biological role, catalyzes the transfer of the AMP portion of ATP to flavin mononucleotide (FMN) to produce flavin adenine dinucleotide (FAD) coenzyme. This Aciduliprofundum boonei (strain DSM 19572 / T469) protein is FAD synthase.